Here is a 279-residue protein sequence, read N- to C-terminus: Phosphatidylglycerol--prolipoprotein diacylglyceryl transferase (279 aa).

A run of 3 helical transmembrane segments spans residues 18 to 38, 55 to 75, and 89 to 109; these read LSVR…YFVA, IIFY…VIFQ, and IWHG…AGVI. A 1,2-diacyl-sn-glycero-3-phospho-(1'-sn-glycerol) is bound at residue Arg137. 2 consecutive transmembrane segments (helical) span residues 203–223 and 235–255; these read LGET…FIEG and IRVA…LIVY.

The protein belongs to the Lgt family.

The protein resides in the cell membrane. The catalysed reaction is L-cysteinyl-[prolipoprotein] + a 1,2-diacyl-sn-glycero-3-phospho-(1'-sn-glycerol) = an S-1,2-diacyl-sn-glyceryl-L-cysteinyl-[prolipoprotein] + sn-glycerol 1-phosphate + H(+). It functions in the pathway protein modification; lipoprotein biosynthesis (diacylglyceryl transfer). Catalyzes the transfer of the diacylglyceryl group from phosphatidylglycerol to the sulfhydryl group of the N-terminal cysteine of a prolipoprotein, the first step in the formation of mature lipoproteins. The sequence is that of Phosphatidylglycerol--prolipoprotein diacylglyceryl transferase from Staphylococcus aureus (strain USA300).